A 133-amino-acid polypeptide reads, in one-letter code: Interleukin-5 (133 aa).

The signal sequence occupies residues 1-20 (MRRMLLHLSVLTLSCVWATA). Asn-46, Asn-75, and Asn-89 each carry an N-linked (GlcNAc...) asparagine glycan.

The protein belongs to the IL-5 family. In terms of assembly, homodimer; disulfide-linked. Interacts with IL5RA. Interacts with CSF2RB. Expressed in lymphoid cells, including spleen, thymus, lymph nodes and peripheral blood mononuclear cells.

The protein localises to the secreted. In terms of biological role, homodimeric cytokine expressed predominantly by T-lymphocytes and NK cells that plays an important role in the survival, differentiation, and chemotaxis of eosinophils. Also acts on activated and resting B-cells to induce immunoglobulin production, growth, and differentiation. Mechanistically, exerts its biological effects through a receptor composed of IL5RA subunit and the cytokine receptor common subunit beta/CSF2RB. Binding to the receptor leads to activation of various kinases including LYN, SYK and JAK2 and thereby propagates signals through the RAS-MAPK and JAK-STAT5 pathways respectively. The protein is Interleukin-5 (Il5) of Mus musculus (Mouse).